The sequence spans 290 residues: Diaminopimelate epimerase (290 aa).

Positions 17, 49, and 69 each coordinate substrate. The active-site Proton donor is the Cys78. Residues 79–80 (GN), Asn166, Asn199, and 217–218 (ER) each bind substrate. The Proton acceptor role is filled by Cys226. Position 227–228 (227–228 (GS)) interacts with substrate.

It belongs to the diaminopimelate epimerase family. In terms of assembly, homodimer.

Its subcellular location is the cytoplasm. The enzyme catalyses (2S,6S)-2,6-diaminopimelate = meso-2,6-diaminopimelate. Its pathway is amino-acid biosynthesis; L-lysine biosynthesis via DAP pathway; DL-2,6-diaminopimelate from LL-2,6-diaminopimelate: step 1/1. Its function is as follows. Catalyzes the stereoinversion of LL-2,6-diaminopimelate (L,L-DAP) to meso-diaminopimelate (meso-DAP), a precursor of L-lysine and an essential component of the bacterial peptidoglycan. The polypeptide is Diaminopimelate epimerase (Afipia carboxidovorans (strain ATCC 49405 / DSM 1227 / KCTC 32145 / OM5) (Oligotropha carboxidovorans)).